The primary structure comprises 391 residues: Histamine H4 receptor (391 aa).

Residues 1 to 19 (MSESNGTDVLPLTAQVPLA) lie on the Extracellular side of the membrane. Asparagine 5 carries N-linked (GlcNAc...) asparagine glycosylation. A helical membrane pass occupies residues 20 to 40 (FLMSLLAFAITIGNAVVILAF). Topologically, residues 41 to 52 (VADRNLRHRSNY) are cytoplasmic. A helical membrane pass occupies residues 53 to 73 (FFLNLAISDFFVGVISIPLYI). The Extracellular segment spans residues 74 to 87 (PHTLFNWNFGSGIC). Cysteine 87 and cysteine 166 are joined by a disulfide. A helical membrane pass occupies residues 88–108 (MFWLITDYLLCTASVYSIVLI). Over 109–131 (SYDRYQSVSNAVRYRAQHTGILK) the chain is Cytoplasmic. Residues 132–152 (IVAQMVAVWILAFLVNGPMIL) form a helical membrane-spanning segment. The Extracellular portion of the chain corresponds to 153 to 174 (ASDSWKNSTNTEECEPGFVTEW). Asparagine 159 carries an N-linked (GlcNAc...) asparagine glycan. The helical transmembrane segment at 175–195 (YILAITAFLEFLLPVSLVVYF) threads the bilayer. Over 196-306 (SVQIYWSLWK…LLRGRKLARS (111 aa)) the chain is Cytoplasmic. Residues 307-327 (LAVLLSAFAICWAPYCLFTIV) traverse the membrane as a helical segment. The Extracellular portion of the chain corresponds to 328–343 (LSTYRRGERPKSIWYS). A helical membrane pass occupies residues 344-364 (IAFWLQWFNSLINPFLYPLCH). The Cytoplasmic portion of the chain corresponds to 365-391 (RRFQKAFWKILCVTKQPAPSQTQSVSS).

It belongs to the G-protein coupled receptor 1 family. In terms of assembly, interacts with TSPAN4.

It is found in the cell membrane. Its function is as follows. The H4 subclass of histamine receptors could mediate the histamine signals in peripheral tissues. Displays a significant level of constitutive activity (spontaneous activity in the absence of agonist). This Rattus norvegicus (Rat) protein is Histamine H4 receptor (Hrh4).